Here is a 347-residue protein sequence, read N- to C-terminus: Dehydratase asqC (347 aa).

Positions 1 to 18 (MRPAILAAFSTLPAAAKA) are cleaved as a signal peptide. Asn51, Asn103, Asn131, Asn143, Asn215, Asn264, and Asn281 each carry an N-linked (GlcNAc...) asparagine glycan.

It catalyses the reaction [(1'E)-5'-(3',3'-dimethyloxiran-2'-yl)-3'-hydroxy-3'-methylpent-1'-en-1'-yl]-quinolinone B = (1'E,3'E)-5-(3,3-dimethyloxiran-2-yl)-3-methylhexa-1,3-dienyl-quinolinone B + H2O. It participates in secondary metabolite biosynthesis. Its pathway is alkaloid biosynthesis. It functions in the pathway mycotoxin biosynthesis. Functionally, dehydratase; part of the gene cluster that mediates the biosynthesis of the aspoquinolone mycotoxins. Within the pathway, the dehydratase asqC catalyzes the dehydratation of the epoxide at C-3 to produce (1'E,3'E)-5-(3,3-dimethyloxiran-2-yl)-3-methylhexa-1,3-dienyl-quinolinone B. The first step of the pathway is catalyzed by the nonribosomal peptide synthetase asqK that condenses anthranilic acid and O-methyl-L-tyrosine to produce 4'-methoxycyclopeptin. 4'-methoxycyclopeptin is then converted to 4'-methoxydehydrocyclopeptin by the ketoglutarate-dependent dioxygenase asqJ. AsqJ also converts its first product 4'-methoxydehydrocyclopeptin to 4'-methoxycyclopenin. The following conversion of 4'-methoxycyclopenin into 4'-methoxyviridicatin is catalyzed by the cyclopenase asqI. 4'-methoxyviridicatin is the precursor of quinolone natural products, and is further converted to quinolinone B. The prenyltransferase asqH1 then catalyzes the canonical Friedel-Crafts alkylation of quinolinone B with dimethylallyl cation to yield dimethylallyl quinolone, which is subjected to FAD-dependent dehydrogenation by the FAD-linked oxidoreductase asqF to yield conjugated aryl diene. The delta(3') double bond then serves as the site of the second alkylation with DMAPP catalyzed by the prenyltransferase asqH2 to yield a carbenium ion intermediate, which can be attacked by H(2)O to yield a styrenyl quinolone containing a C3'-hydroxyprenyl chain. The FAD-dependent monooxygenase asqG performs epoxidation of the terminal C7'-C8' olefin. Finally, after dehydratation of the epoxide at C3 by asqC, the quinolone epoxide rearrangement protein asqO catalyzes an enzymatic 3-exo-tet cyclization to yield the cyclopropyl-THF ring system in aspoquinolone. This Emericella nidulans (strain FGSC A4 / ATCC 38163 / CBS 112.46 / NRRL 194 / M139) (Aspergillus nidulans) protein is Dehydratase asqC.